A 420-amino-acid chain; its full sequence is Serine hydroxymethyltransferase (420 aa).

(6S)-5,6,7,8-tetrahydrofolate-binding positions include leucine 121 and 125–127; that span reads GHL. Lysine 230 is modified (N6-(pyridoxal phosphate)lysine). (6S)-5,6,7,8-tetrahydrofolate contacts are provided by residues glutamate 246 and 354–356; that span reads SPF.

It belongs to the SHMT family. As to quaternary structure, homodimer. Pyridoxal 5'-phosphate is required as a cofactor.

It localises to the cytoplasm. The catalysed reaction is (6R)-5,10-methylene-5,6,7,8-tetrahydrofolate + glycine + H2O = (6S)-5,6,7,8-tetrahydrofolate + L-serine. It participates in one-carbon metabolism; tetrahydrofolate interconversion. Its pathway is amino-acid biosynthesis; glycine biosynthesis; glycine from L-serine: step 1/1. Functionally, catalyzes the reversible interconversion of serine and glycine with tetrahydrofolate (THF) serving as the one-carbon carrier. This reaction serves as the major source of one-carbon groups required for the biosynthesis of purines, thymidylate, methionine, and other important biomolecules. Also exhibits THF-independent aldolase activity toward beta-hydroxyamino acids, producing glycine and aldehydes, via a retro-aldol mechanism. The protein is Serine hydroxymethyltransferase of Rickettsia rickettsii (strain Iowa).